The following is a 496-amino-acid chain: MATCADTLGPLLGTAAANATDYLCNQFADTTSAVDSTYLLFSAYLVFAMQLGFAMLCAGSVRAKNTMNIMLTNVLDAAAGALFYYLFGFAFAFGAPSNGFIGKHFFGLKQVPQVGFDYSFFLFQWAFAIAAAGITSGSIAERTQFVAYLIYSAFLTGFVYPVVSHWIWSADGWASASRTSGSLLFGSGVIDFAGSGVVHMVGGVAGLWGALIEGPRIGRFDHAGRSVALRGHSASLVVLGSFLLWFGWYGFNPGSFLTILKSYGPPGSIHGQWSAVGRTAVTTTLAGSTAALTTLFGKRLQTGHWNVIDVCNGLLGGFAAITAGCSVVDPWAAIICGFVSAWVLIGLNALAARLKFDDPLEAAQLHGGCGAWGVIFTALFARKEYVDQIFGQPGRPYGLFMGGGGRLLGAHIVVILVIAAWVSFTMAPLFLVLNKLGLLRISAEDEMAGMDQTRHGGFAYAYHDDDASGKPDRSVGGFMLKSAHGTQVAAEMGGHV.

The next 11 membrane-spanning stretches (helical) occupy residues 39-59 (LLFS…LCAG), 74-94 (VLDA…FAFG), 120-140 (FFLF…GSIA), 148-168 (YLIY…HWIW), 192-212 (FAGS…GALI), 236-256 (LVVL…PGSF), 274-296 (SAVG…TTLF), 307-327 (VIDV…GCSV), 331-351 (WAAI…NALA), 360-380 (LEAA…TALF), and 412-432 (IVVI…LFLV).

Belongs to the ammonia transporter channel (TC 1.A.11.2) family. Expressed in exodermis, sclerenchyma, endodermis and pericycle cells of primary root tips.

The protein localises to the membrane. In terms of biological role, ammonium transporter probably involved in ammonium uptake from the soil and ammonium uptake and retrieval in the vascular system. The chain is Ammonium transporter 1 member 2 (AMT1-2) from Oryza sativa subsp. japonica (Rice).